A 572-amino-acid polypeptide reads, in one-letter code: 3-ketosteroid oxygenase (572 aa).

A run of 2 helical transmembrane segments spans residues 52-72 and 84-104; these read AFALSHHIIMGIYLLILRNFL and YFMRVFIVHIIYIIISYFIRI.

This sequence belongs to the cytochrome P450 family. As to expression, expressed in the 2 embryonic head hypodermal cells XXXL/R.

It localises to the membrane. The enzyme catalyses 5alpha-cholest-7-en-3-one + 3 reduced [NADPH--hemoprotein reductase] + 3 O2 = (25S)-Delta7-dafachronate + 3 oxidized [NADPH--hemoprotein reductase] + 4 H2O + 4 H(+). It carries out the reaction cholest-4-en-3-one + 3 reduced [NADPH--hemoprotein reductase] + 3 O2 = (25S)-3-oxocholest-4-en-26-oate + 3 oxidized [NADPH--hemoprotein reductase] + 4 H2O + 4 H(+). It functions in the pathway steroid hormone biosynthesis; dafachronic acid biosynthesis. Its function is as follows. Converts the 3-keto steroids 4-cholesten-3-one and lathosterone into the carboxylic metabolites 3-keto-4-cholestenate (Delta(4)-dafachronic acid, Delta(4)-DA) and 3-keto-7,(5a)-cholestenate (Delta(7)-dafachronic acid, Delta(7)-DA) respectively, by catalyzing successive oxidations at C-26. Dafachronic acids bind directly to the nuclear hormone receptor (NHR) DAF-12, suppressing dauer formation and inducing reproductive growth. In a non-cell autonomous manner, negatively regulates body wall muscle arm extensions to motor neurons probably by preventing daf-12 isoform b activation. May be involved in thermotolerance. The polypeptide is 3-ketosteroid oxygenase (daf-9) (Caenorhabditis elegans).